The following is an 84-amino-acid chain: Large ribosomal subunit protein bL31B-2 (84 aa).

It belongs to the bacterial ribosomal protein bL31 family. Type B subfamily. In terms of assembly, part of the 50S ribosomal subunit.

The sequence is that of Large ribosomal subunit protein bL31B-2 from Streptomyces coelicolor (strain ATCC BAA-471 / A3(2) / M145).